The sequence spans 370 residues: MISTTDYPTVETTTTAEELYAEYISAPASSMSPAAIAEHLQQNQITFEIPSAHDLRHIDALNSFNALLQRIGNAAVSYDPAPPSGWSPDGSISTEQLSKSVVLDLADLRDRSEESGESSWWSQIFGDADMHVIINYLWIGVVSSLVILSLVFILFSCYFYRKFRTWKKCNKDIRAQIHAASDSYSSHLVGCDASRLLLHQQMQHPHHRSSEAGFYQIESPPCYTIATGLPSYDEALHHQPRHFAYGMKFVYPSLAAVHHHHHCISNWEKQEPLNKLQKCKLSAAAAVEEDKADSSSSTSASASPSSSESSNLATATPAICINMPSGRQDEEVDNSDSDSAIAVAVAVAQSLQPAAPADDDCASLVVVVAA.

Topologically, residues 1 to 136 (MISTTDYPTV…DADMHVIINY (136 aa)) are extracellular. Positions 108–131 (LRDRSEESGESSWWSQIFGDADMH) are required for vesicular localization. A helical transmembrane segment spans residues 137-157 (LWIGVVSSLVILSLVFILFSC). Residues 158–370 (YFYRKFRTWK…CASLVVVVAA (213 aa)) lie on the Cytoplasmic side of the membrane. 2 consecutive short sequence motifs (PY-motif) follow at residues 220-223 (PPCY) and 229-232 (LPSY). The segment at 227-237 (TGLPSYDEALH) is interaction with Nedd4. Residues 287–312 (VEEDKADSSSSTSASASPSSSESSNL) are disordered. Low complexity predominate over residues 294 to 312 (SSSSTSASASPSSSESSNL).

The protein belongs to the commissureless family. As to quaternary structure, interacts (probably via PY-motifs) with Nedd4 (via WW2 domain). Interacts with Robo. Post-translationally, ubiquitinated by Nedd4; which promotes endocytosis of the comm/robo complex and comm proteasomal degradation. Not ubiquitinated by Nedd4.

The protein localises to the cytoplasmic vesicle membrane. It is found in the cell membrane. Its function is as follows. Controls axon guidance across the CNS midline by preventing the delivery of Robo to the growth cone. The protein is Protein commissureless 1 of Drosophila melanogaster (Fruit fly).